A 589-amino-acid chain; its full sequence is TAF5-like RNA polymerase II p300/CBP-associated factor-associated factor 65 kDa subunit 5L (589 aa).

Residues 211-221 (ASGSSSRSENN) show a composition bias toward polar residues. The disordered stretch occupies residues 211 to 230 (ASGSSSRSENNGLEPPDMPS). WD repeat units follow at residues 266 to 305 (NTEQ…LKSE), 340 to 379 (GHCG…NTVL), 382 to 421 (GHAY…PLRI), 424 to 463 (GHLA…SVRL), 466 to 505 (GHRG…LYKE), and 508 to 547 (GHTD…CSAP).

This sequence belongs to the WD repeat TAF5 family. In terms of assembly, the PCAF complex is composed of a number of TBP-associated factors (TAFS), such as TAF5, TAF5L, TAF6, TAF6L, TAF9, TAF10 and TAF12, PCAF, and also PCAF-associated factors (PAFs), such as TADA2L/ADA2, TADA3L/ADA3 and SPT3. Component of the STAGA transcription coactivator-HAT complex, at least composed of SUPT3H, GCN5L2, TAF5L, TAF6L, SUPT7L, TADA3L, TAD1L, TAF10, TAF12, TRRAP and TAF9.

The protein resides in the nucleus. In terms of biological role, functions as a component of the PCAF complex. The PCAF complex is capable of efficiently acetylating histones in a nucleosomal context. The PCAF complex could be considered as the human version of the yeast SAGA complex. With TAF6L, acts as an epigenetic regulator essential for somatic reprogramming. Regulates target genes through H3K9ac deposition and MYC recruitment which trigger MYC regulatory network to orchestrate gene expression programs to control embryonic stem cell state. The protein is TAF5-like RNA polymerase II p300/CBP-associated factor-associated factor 65 kDa subunit 5L of Homo sapiens (Human).